A 246-amino-acid chain; its full sequence is MAGHSKWANIKHRKAAQDAQRGKIFTKLIRELVTAAKLGGGDVNANPRLRTAVDKALSSNMTRDTINRAIERGVGGGDDTNMETKIYEGYGPGGTAVMVECLSDNANRTISQVRPSFTKCGGNLGTEGSVGYLFSKKGLILITSGDEDVIMEAAIEAGADDVQVQEDGSFEVYTAWEELGAVRDGIESAGIKIDNAEVTMIPSTTVELDAETAPKLLKLIDMLEDCDDVQNVYHNGEISDEIAAML.

This sequence belongs to the TACO1 family.

The protein resides in the cytoplasm. This chain is Probable transcriptional regulatory protein PM0980, found in Pasteurella multocida (strain Pm70).